We begin with the raw amino-acid sequence, 397 residues long: MSTTVYLQKDREKSLLRRHPWIFSKAIDKVKGKPEAGEPVDIVDQRGKWLARGAWSPDSQIRLRVWTFKQDEQIDTEFFVRRLQQAQAGRELLISRLQLSAYRLVAAESDLLPGITIDRYNDHLVCQLLSSGAEYHRHELISALQQLYPTCSIYERSDVAVRKKEGLAERTGLIYGEVPPDEVIIEENNGIKISVDIKGGHKTGFYLDQRDNRAIAGRYAKDRRVLNCFCYTGGFGVYALQGGAKEVINVDVSESALELAKHNATLNKLDLTKARFEKQDVFKLLREYRERGEKFDMIVLDPPKFAENKAQLIGACRGYKDINLLAFQLLNPEGILLTFSCSGLMTSELFQKIVADAALDAGREAQILERMTQAADHPIATPYPEGYYLKGLVVRAI.

In terms of domain architecture, PUA spans 2–81 (STTVYLQKDR…EQIDTEFFVR (80 aa)).

Belongs to the methyltransferase superfamily. RlmI family.

It localises to the cytoplasm. The catalysed reaction is cytidine(1962) in 23S rRNA + S-adenosyl-L-methionine = 5-methylcytidine(1962) in 23S rRNA + S-adenosyl-L-homocysteine + H(+). Specifically methylates the cytosine at position 1962 (m5C1962) of 23S rRNA. This is Ribosomal RNA large subunit methyltransferase I from Tolumonas auensis (strain DSM 9187 / NBRC 110442 / TA 4).